We begin with the raw amino-acid sequence, 299 residues long: MASSLTLPMAMAFTLLALSFASAMGGSMNSSRFDELFQPSWAFDHFVYEGEVLKMKLDNYSGAGFSSKGKYLFGKVTVQIKLVEGDSAGTVTAFYMSSDGTNHNEFDFEFLGNTTGEPYLVQTNVYVNGVGNREQRLNLWFDPTKDFHSYSLLWNQRQVVFMVDETPIRVHSNLEHRGIPFPKDQPMGVYSSIWNADDWATQGGRIKTDWSHAPFVASYQGFAIDACECPAAVAATDNARRCSSSAEKQFWWDMPTLSELSLHQSHQLIWVRANHLVYDYCTDTARFPVTPAECEHHRH.

The N-terminal stretch at 1-25 (MASSLTLPMAMAFTLLALSFASAMG) is a signal peptide. The GH16 domain occupies 26 to 219 (GSMNSSRFDE…WSHAPFVASY (194 aa)). Glutamate 105 (nucleophile) is an active-site residue. Glutamate 109 acts as the Proton donor in catalysis. Glutamate 109 is a binding site for xyloglucan. An N-linked (GlcNAc...) asparagine glycan is attached at asparagine 113. Residues 122 to 124 (QTN), 132 to 134 (NRE), 198 to 199 (DW), and glycine 203 each bind xyloglucan. Cystine bridges form between cysteine 227/cysteine 242 and cysteine 281/cysteine 294. Arginine 286 contributes to the xyloglucan binding site.

This sequence belongs to the glycosyl hydrolase 16 family. XTH group 1 subfamily. Contains at least one intrachain disulfide bond essential for its enzymatic activity. In terms of tissue distribution, highest expression in ripe leaves after full expansion. Also expressed in fruits, and at a lower level in flowers and stems (picked at anthesis).

The protein localises to the secreted. Its subcellular location is the cell wall. It localises to the extracellular space. The protein resides in the apoplast. The catalysed reaction is breaks a beta-(1-&gt;4) bond in the backbone of a xyloglucan and transfers the xyloglucanyl segment on to O-4 of the non-reducing terminal glucose residue of an acceptor, which can be a xyloglucan or an oligosaccharide of xyloglucan.. Functionally, catalyzes xyloglucan endotransglycosylation (XET). Cleaves and religates xyloglucan polymers. Does not catalyze xyloglucan endohydrolysis (XEH). Probably involved in cell wall restructuring during postharvest fruit softening. The polypeptide is Xyloglucan endotransglucosylase protein 6 (Diospyros kaki (Kaki persimmon)).